The primary structure comprises 238 residues: Transcription factor PCL1 (238 aa).

Over residues 71-90 (RLRRASSSSSSSFPAFASKG) the composition is skewed to low complexity. Residues 71-119 (RLRRASSSSSSSFPAFASKGAGTGADEAESGGGADGGNGNTNNSSSKRA) are disordered. Positions 100 to 109 (SGGGADGGNG) are enriched in gly residues. The myb-like GARP DNA-binding region spans 115–174 (SSKRARLVWTPQLHKRFVEVVAHLGMKNAVPKTIMQLMNVEGLTRENVASHLQKYRLYVK).

The protein localises to the nucleus. Functionally, transcription factor that is essential for the generation of the circadian clock oscillation. Binds to specific sites on CCA1 promoter leading to CCA1 activation. In Oryza sativa subsp. japonica (Rice), this protein is Transcription factor PCL1 (PCL1).